Here is a 150-residue protein sequence, read N- to C-terminus: Ribosome-binding factor A (150 aa).

The disordered stretch occupies residues 126 to 150; that stretch reads EVARDLSHDDDEDGGADEAPRNGDE.

This sequence belongs to the RbfA family. As to quaternary structure, monomer. Binds 30S ribosomal subunits, but not 50S ribosomal subunits or 70S ribosomes.

The protein localises to the cytoplasm. In terms of biological role, one of several proteins that assist in the late maturation steps of the functional core of the 30S ribosomal subunit. Associates with free 30S ribosomal subunits (but not with 30S subunits that are part of 70S ribosomes or polysomes). Required for efficient processing of 16S rRNA. May interact with the 5'-terminal helix region of 16S rRNA. The sequence is that of Ribosome-binding factor A from Brucella abortus (strain S19).